The following is a 407-amino-acid chain: Probable 2,3-bisphosphoglycerate-independent phosphoglycerate mutase (407 aa).

The segment at 175 to 200 (GSDAINDTDPQQVGKEPLEPKGENPN) is disordered.

It belongs to the BPG-independent phosphoglycerate mutase family. A-PGAM subfamily.

It carries out the reaction (2R)-2-phosphoglycerate = (2R)-3-phosphoglycerate. The protein operates within carbohydrate degradation; glycolysis; pyruvate from D-glyceraldehyde 3-phosphate: step 3/5. In terms of biological role, catalyzes the interconversion of 2-phosphoglycerate and 3-phosphoglycerate. The polypeptide is Probable 2,3-bisphosphoglycerate-independent phosphoglycerate mutase (Aquifex aeolicus (strain VF5)).